A 108-amino-acid polypeptide reads, in one-letter code: Nucleoid-associated protein Avin_19840 (108 aa).

Belongs to the YbaB/EbfC family. Homodimer.

It is found in the cytoplasm. It localises to the nucleoid. Binds to DNA and alters its conformation. May be involved in regulation of gene expression, nucleoid organization and DNA protection. The sequence is that of Nucleoid-associated protein Avin_19840 from Azotobacter vinelandii (strain DJ / ATCC BAA-1303).